Reading from the N-terminus, the 349-residue chain is ATP phosphoribosyltransferase regulatory subunit (349 aa).

Residues 325 to 349 (ANGRGRGVRPRRASARGGRAGTRPR) are disordered. Residues 339 to 349 (ARGGRAGTRPR) are compositionally biased toward low complexity.

It belongs to the class-II aminoacyl-tRNA synthetase family. HisZ subfamily. As to quaternary structure, heteromultimer composed of HisG and HisZ subunits.

It localises to the cytoplasm. It participates in amino-acid biosynthesis; L-histidine biosynthesis; L-histidine from 5-phospho-alpha-D-ribose 1-diphosphate: step 1/9. Required for the first step of histidine biosynthesis. May allow the feedback regulation of ATP phosphoribosyltransferase activity by histidine. This chain is ATP phosphoribosyltransferase regulatory subunit, found in Anaeromyxobacter dehalogenans (strain 2CP-C).